The chain runs to 160 residues: S-ribosylhomocysteine lyase (160 aa).

Residues His-57, His-61, and Cys-127 each coordinate Fe cation.

This sequence belongs to the LuxS family. Homodimer. The cofactor is Fe cation.

The catalysed reaction is S-(5-deoxy-D-ribos-5-yl)-L-homocysteine = (S)-4,5-dihydroxypentane-2,3-dione + L-homocysteine. Involved in the synthesis of autoinducer 2 (AI-2) which is secreted by bacteria and is used to communicate both the cell density and the metabolic potential of the environment. The regulation of gene expression in response to changes in cell density is called quorum sensing. Catalyzes the transformation of S-ribosylhomocysteine (RHC) to homocysteine (HC) and 4,5-dihydroxy-2,3-pentadione (DPD). The protein is S-ribosylhomocysteine lyase of Streptococcus suis (strain 98HAH33).